A 319-amino-acid chain; its full sequence is G-protein coupled receptor 171 (319 aa).

At 1 to 21 the chain is on the extracellular side; it reads MTNSSTFCPVYRDLEPFTYFF. Residue Asn-3 is glycosylated (N-linked (GlcNAc...) asparagine). Residues 22-42 traverse the membrane as a helical segment; that stretch reads YLVFLIGIIGSCFATWAFIQK. Topologically, residues 43-48 are cytoplasmic; the sequence is TTNHRC. The helical transmembrane segment at 49 to 69 threads the bilayer; the sequence is VSIYLINLLTADFLLTLALPV. The Extracellular portion of the chain corresponds to 70–89; sequence KIIVDLGVAPWKLRIFHCQV. A helical transmembrane segment spans residues 90 to 110; sequence TACLIYINMYLSIIFLAFVSI. Residues 111–132 are Cytoplasmic-facing; that stretch reads DRCLQLIHSCKIYRIQEPGFAK. The helical transmembrane segment at 133 to 153 threads the bilayer; sequence MISAVVWLMVLLIMVPNMVIP. Residues 154–181 are Extracellular-facing; sequence IKDIKEKSNVGCMEFKKEFGRNWHLLTN. Residues 182-202 form a helical membrane-spanning segment; that stretch reads FICVAIFLNFSVIILISNFLA. The Cytoplasmic segment spans residues 203–224; that stretch reads IRQLYRNRDNTNYPSVKSALLH. The chain crosses the membrane as a helical span at residues 225 to 245; that stretch reads ILLVTASYIICFVPYHAVRIP. Topologically, residues 246–268 are extracellular; the sequence is YTLSQTEVISDCSTRIALFKAKE. A helical transmembrane segment spans residues 269 to 289; that stretch reads ATLLLAVSNLCFDPILYYHLS. Residues 290–319 are Cytoplasmic-facing; it reads KAFRLKVTETFASPKKSKPLEERLRSENDV.

The protein belongs to the G-protein coupled receptor 1 family. In terms of tissue distribution, highly expressed in hypothalamus, including the arcuate nucleus, paraventricular nucleus and dorsomedial hypothalamus. Expressed in periaqueductal gray (at protein level), found primarily in GABAergic neurons and to a lesser extent in glutamatergic neurons. Expressed in T cells and natural killer cells.

Its subcellular location is the cell membrane. Functionally, G-protein coupled receptor for Big LEN, a 16-amino acid neuropeptide produced from the precursor protein, proSAAS (encoded by PCSK1N). Acts through a G(i)-alpha-mediated pathway in response to Big LEN. Big LEN-GPR171 system plays an important role in regulating feeding and metabolism. Also plays a role in modulating fear and anxiety-like behaviors in the basolateral amygdala. Big LEN-GPR171 modulates the mu-type opioid receptor signaling and antinociception. Acts as a negative regulator T cell function. The sequence is that of G-protein coupled receptor 171 (Gpr171) from Mus musculus (Mouse).